The primary structure comprises 756 residues: Amine oxidase [copper-containing] 2 (756 aa).

At 1–4 (MHLK) the chain is on the cytoplasmic side. The chain crosses the membrane as a helical span at residues 5 to 25 (IVLAFLALSLITIFALAYVLL). Over 26–756 (TSPGGSSQPP…DLPPFSYHGF (731 aa)) the chain is Extracellular. Residues N133, N198, and N226 are each glycosylated (N-linked (GlcNAc...) asparagine). D380 functions as the Proton acceptor in the catalytic mechanism. An intrachain disulfide couples C398 to C424. The active-site Schiff-base intermediate with substrate; via topaquinone is Y465. A 2',4',5'-topaquinone modification is found at Y465. Cu(2+)-binding residues include H516 and H518. Residues D525, L526, D527, E568, E637, F659, and N661 each coordinate Ca(2+). The N-linked (GlcNAc...) asparagine glycan is linked to N662. E663, D669, and L670 together coordinate Ca(2+). H680 lines the Cu(2+) pocket. Cysteines 730 and 737 form a disulfide.

Belongs to the copper/topaquinone oxidase family. As to quaternary structure, homodimer; disulfide-linked. Probably forms heterodimers with AOC3. Cu(2+) is required as a cofactor. Requires Ca(2+) as cofactor. The cofactor is L-topaquinone. In terms of processing, topaquinone (TPQ) is generated by copper-dependent autoxidation of a specific tyrosyl residue. Expressed in many tissues including adipocytes with higher expression in retina where it is active. As to expression, not expressed in testis. In terms of tissue distribution, not expressed in thymus.

Its subcellular location is the cell membrane. The protein localises to the cytoplasm. It carries out the reaction 2-phenylethylamine + O2 + H2O = 2-phenylacetaldehyde + H2O2 + NH4(+). It catalyses the reaction tryptamine + O2 + H2O = indole-3-acetaldehyde + H2O2 + NH4(+). The enzyme catalyses tyramine + O2 + H2O = (4-hydroxyphenyl)acetaldehyde + H2O2 + NH4(+). Catalyzes the oxidative deamination of primary amines to the corresponding aldehydes with the concomitant production of hydrogen peroxide and ammonia. Has a preference for 2-phenylethylamine, tryptamine and tyramine. Could also act on methylamine and benzylamine but much less efficiently. The sequence is that of Amine oxidase [copper-containing] 2 from Homo sapiens (Human).